Here is a 179-residue protein sequence, read N- to C-terminus: MAELATIARPYAEALFRVAEGGDIAAWSTLVQELAQVARLPEVLSVASSPKVTRTQVAELLLAAAKSPLAAGAEAKNFVQMLVDNHRIALLPEIAEQFEALKNEREGAADAEIVSAFPLNGADLDSLVSGLERKFKRKLKPTVEVDSSLIGGVRVTVGDEVLDTSVRARLASMQAALTA.

This sequence belongs to the ATPase delta chain family. F-type ATPases have 2 components, F(1) - the catalytic core - and F(0) - the membrane proton channel. F(1) has five subunits: alpha(3), beta(3), gamma(1), delta(1), epsilon(1). F(0) has three main subunits: a(1), b(2) and c(10-14). The alpha and beta chains form an alternating ring which encloses part of the gamma chain. F(1) is attached to F(0) by a central stalk formed by the gamma and epsilon chains, while a peripheral stalk is formed by the delta and b chains.

The protein resides in the cell inner membrane. F(1)F(0) ATP synthase produces ATP from ADP in the presence of a proton or sodium gradient. F-type ATPases consist of two structural domains, F(1) containing the extramembraneous catalytic core and F(0) containing the membrane proton channel, linked together by a central stalk and a peripheral stalk. During catalysis, ATP synthesis in the catalytic domain of F(1) is coupled via a rotary mechanism of the central stalk subunits to proton translocation. Functionally, this protein is part of the stalk that links CF(0) to CF(1). It either transmits conformational changes from CF(0) to CF(1) or is implicated in proton conduction. This chain is ATP synthase subunit delta, found in Burkholderia cenocepacia (strain ATCC BAA-245 / DSM 16553 / LMG 16656 / NCTC 13227 / J2315 / CF5610) (Burkholderia cepacia (strain J2315)).